The following is an 876-amino-acid chain: Inter-alpha-trypsin inhibitor heavy chain H3 (876 aa).

An N-terminal signal peptide occupies residues 1–18 (MVALSHLGSALQLGSLWG). A propeptide spanning residues 19–31 (FPRSPFRLLGKRS) is cleaved from the precursor. Residues 26-155 (LLGKRSLPEG…KVTFELTYEE (130 aa)) enclose the VIT domain. Residue N88 is glycosylated (N-linked (GlcNAc...) asparagine). The VWFA domain occupies 281–464 (NVAFVIDISG…LQLQGFYEEV (184 aa)). N577 carries N-linked (GlcNAc...) asparagine glycosylation. D637 carries the aspartate 1-(chondroitin 4-sulfate)-ester modification. Positions 638–876 (PHFIIQVPEK…HTDYIVPNLF (239 aa)) are excised as a propeptide.

Belongs to the ITIH family. I-alpha-I plasma protease inhibitors are assembled from one or two heavy chains (HC) and one light chain, bikunin. Pre-alpha-inhibitor (P-alpha-I) is composed of ITIH3/HC3 and bikunin. Post-translationally, heavy chains are linked to bikunin via chondroitin 4-sulfate esterified to the alpha-carboxyl of the C-terminal aspartate after propeptide cleavage.

It localises to the secreted. In terms of biological role, may act as a carrier of hyaluronan in serum or as a binding protein between hyaluronan and other matrix protein, including those on cell surfaces in tissues to regulate the localization, synthesis and degradation of hyaluronan which are essential to cells undergoing biological processes. This Pongo abelii (Sumatran orangutan) protein is Inter-alpha-trypsin inhibitor heavy chain H3 (ITIH3).